The primary structure comprises 1260 residues: MTQENNNSTNLKTVIIPFHEFIANELGNNCIKPNDEILTVLLKREEWEGHEDGGETPTELSDRVKNWQPYDARKDRQQLTRVEQIQYQLKYGVKSLQLILGQAFYRISLVNAIMHRQYEQGVKVTSRGRAKNILGVVKWNATYWPQYLKYYGFSGILNYCLTVLDYRRVFQLSVFTIAMGAGIMRFGLAQKLTKTQPTYVISAEKFSVQPKSKSEQNLLMEKVFGKKLPKALENPIVLYVEPLGLTNIQLRDEGTKEITNYPFIGLTPETLTTHRSARPMVPTYEGLEKFDADYLKAIRAASYLIDQETLKNVIDTGTVSKNSIHSPNFFEKVDLNFFEYEEFDEKTDNNQSSVQELSQFFNPKMIRTLSTEGISLGTQPDWKMAGPKLQTNTLAVNDVYPLIDKYWSESKADQIHKTSADFQLENSVGKLTSAAYRTESEFDFNDLEDFDGLEVDEWDDFYFDRKSFRAKTAERENEKFNEFLMQTSMDELGLYKNGFPSLELKRINENLTKEQFKDLELIGGLLPSIFTWYAFYTLYQFRLNYIYNVRKKPEPILYTRLDHFGRLQNKVKLNEVVGIDGGGEAFDKLFSALQRARGMGLYLPTVLLTIWESSLSPLIPGELDNWLLTQRNKVRMNFIKHTTSKVDFLMPEVTLAQKMLSDPDKTSGYESRFHFLTHAVDSAINKMDAFEKSNSKMLSNLELTLQESKTKMSKIRHLQGLLPIMKVKELFKVTLKLLQLIENELSHSPVISALKPGRYGLNTLPKGMLLVGDPGNGRSFLARAIASESRLPVFKTESTRFLDVKFGVMRLMSLFRRVRDQAPGILFIRDIDLITIDRERTNSPELIQLTTQFLICFDGYYIGSEARPTQRKIFTLGSVSDITRMDPACLRSGRFEWVVNLRKPILGERKFLLLQKASQSPVQIDATIAWNYFGLMSEGFTNAEVVSIVNNSTLQAIRKNEFVHTNESLNEGLNSIFQLRWNQTVSKAADEGFFNELHLSEVINSNKLTVDYTMNEKERPFKTKCMHLLTTVKNWSPKNNPTEISSLRMQNIGMSIQTQPVDYSQELIVELLDFMAEGAFIRQLRRCSPANTFVTQTSYSGQLGERLNKTFLKGCLNYRMENTLALIENPTQGLKTLSGTISWEALNKTALKDLQQRTALFTSWYKSRMFCQLKPDQRSLTNRYGYNPNYQQTGSSSMNRFKDRIKARLRESTHQAHPLYAMSGSIRGTFGSRGYETRLQRPLTGPVTQMSQEFLNIQFK.

It localises to the plastid. Its subcellular location is the chloroplast. This is an uncharacterized protein from Ostreococcus tauri.